The sequence spans 438 residues: Glutamate-1-semialdehyde 2,1-aminomutase (438 aa).

K272 carries the post-translational modification N6-(pyridoxal phosphate)lysine.

This sequence belongs to the class-III pyridoxal-phosphate-dependent aminotransferase family. HemL subfamily. Homodimer. Pyridoxal 5'-phosphate serves as cofactor.

It is found in the cytoplasm. The catalysed reaction is (S)-4-amino-5-oxopentanoate = 5-aminolevulinate. Its pathway is porphyrin-containing compound metabolism; protoporphyrin-IX biosynthesis; 5-aminolevulinate from L-glutamyl-tRNA(Glu): step 2/2. It functions in the pathway porphyrin-containing compound metabolism; chlorophyll biosynthesis. The polypeptide is Glutamate-1-semialdehyde 2,1-aminomutase (Chloroflexus aggregans (strain MD-66 / DSM 9485)).